Reading from the N-terminus, the 239-residue chain is Probable inner membrane transporter protein TsaS (239 aa).

The next 4 helical transmembrane spans lie at 65–85, 128–148, 160–180, and 186–206; these read AIGA…WLMG, GLVG…IALL, ATVP…LFGA, and AHTF…VVLG.

This sequence belongs to the 4-toluene sulfonate uptake permease (TSUP) (TC 2.A.102) family. Part of a two-component transport system composed of TsaT and TsaS.

Its subcellular location is the cell inner membrane. In terms of biological role, involved in the uptake of p-toluenesulphonate (TSA). The polypeptide is Probable inner membrane transporter protein TsaS (tsaS) (Comamonas testosteroni (Pseudomonas testosteroni)).